Here is a 360-residue protein sequence, read N- to C-terminus: Olfactory receptor 1L1 (360 aa).

Topologically, residues M1–K75 are extracellular. A glycan (N-linked (GlcNAc...) asparagine) is linked at N55. Residues P76 to I99 traverse the membrane as a helical segment. At R100–T107 the chain is on the cytoplasmic side. The helical transmembrane segment at P108–P129 threads the bilayer. Residues K130–Q150 are Extracellular-facing. The cysteines at positions 147 and 239 are disulfide-linked. The helical transmembrane segment at M151 to I170 threads the bilayer. Topologically, residues D171 to R189 are cytoplasmic. A helical transmembrane segment spans residues C190–L208. Residues H209–E246 are Extracellular-facing. A helical membrane pass occupies residues I247–L269. The Cytoplasmic segment spans residues R270–K286. Residues A287–Y309 form a helical membrane-spanning segment. At F310–Q321 the chain is on the extracellular side. N-linked (GlcNAc...) asparagine glycosylation occurs at N315. The helical transmembrane segment at I322–L341 threads the bilayer. Residues R342–Q360 are Cytoplasmic-facing.

This sequence belongs to the G-protein coupled receptor 1 family.

Its subcellular location is the cell membrane. Functionally, odorant receptor. The chain is Olfactory receptor 1L1 (OR1L1) from Homo sapiens (Human).